The chain runs to 380 residues: Chaperone protein DnaJ (380 aa).

The 65-residue stretch at D4 to G68 folds into the J domain. A compositionally biased stretch (basic and acidic residues) spans K27 to R87. Positions K27–D126 are disordered. Positions G88–G100 are enriched in gly residues. A compositionally biased stretch (low complexity) spans S115–G124. The segment at G141–E223 adopts a CR-type zinc-finger fold. Zn(2+) is bound by residues C154, C157, C171, C174, C197, C200, C211, and C214. CXXCXGXG motif repeat units lie at residues C154 to G161, C171 to G178, C197 to G204, and C211 to G218.

This sequence belongs to the DnaJ family. In terms of assembly, homodimer. The cofactor is Zn(2+).

It is found in the cytoplasm. In terms of biological role, participates actively in the response to hyperosmotic and heat shock by preventing the aggregation of stress-denatured proteins and by disaggregating proteins, also in an autonomous, DnaK-independent fashion. Unfolded proteins bind initially to DnaJ; upon interaction with the DnaJ-bound protein, DnaK hydrolyzes its bound ATP, resulting in the formation of a stable complex. GrpE releases ADP from DnaK; ATP binding to DnaK triggers the release of the substrate protein, thus completing the reaction cycle. Several rounds of ATP-dependent interactions between DnaJ, DnaK and GrpE are required for fully efficient folding. Also involved, together with DnaK and GrpE, in the DNA replication of plasmids through activation of initiation proteins. The sequence is that of Chaperone protein DnaJ from Natronomonas pharaonis (strain ATCC 35678 / DSM 2160 / CIP 103997 / JCM 8858 / NBRC 14720 / NCIMB 2260 / Gabara) (Halobacterium pharaonis).